Here is a 682-residue protein sequence, read N- to C-terminus: Potassium-transporting ATPase ATP-binding subunit (682 aa).

4 helical membrane passes run 34 to 54, 62 to 82, 219 to 239, and 254 to 274; these read PVMFIVWIGSLLTTCISIAMA, ALFSVAISGWLWVTVLFANFA, IALTILLIALTIVFLLATATL, and VLVALLVCLIPTTIGGLLSAI. Residue Asp307 is the 4-aspartylphosphate intermediate of the active site. ATP contacts are provided by residues Asp344, Glu348, 377–384, and Lys395; that span reads FTAQSRMS. Mg(2+)-binding residues include Asp518 and Asp522. A run of 3 helical transmembrane segments spans residues 588 to 608, 616 to 636, and 656 to 676; these read FAIIPAAFAVTYPQLNALNIM, AILSAVIFNALIIVFLIPLAL, and IYGLGGLLVPFIGIKVIDLLL.

Belongs to the cation transport ATPase (P-type) (TC 3.A.3) family. Type IA subfamily. As to quaternary structure, the system is composed of three essential subunits: KdpA, KdpB and KdpC.

Its subcellular location is the cell inner membrane. The enzyme catalyses K(+)(out) + ATP + H2O = K(+)(in) + ADP + phosphate + H(+). Its function is as follows. Part of the high-affinity ATP-driven potassium transport (or Kdp) system, which catalyzes the hydrolysis of ATP coupled with the electrogenic transport of potassium into the cytoplasm. This subunit is responsible for energy coupling to the transport system and for the release of the potassium ions to the cytoplasm. The chain is Potassium-transporting ATPase ATP-binding subunit from Escherichia coli O157:H7 (strain EC4115 / EHEC).